A 484-amino-acid chain; its full sequence is Arginine ADP-riboxanase OspC3 (484 aa).

Residues H143, Q144, S145, N155, K157, T169, N172, and T173 each coordinate NAD(+). E326 is an active-site residue. ANK repeat units follow at residues 369 to 398 (MAHQ…FTKQ), 413 to 444 (NLYD…DVNK), and 451 to 480 (SGDT…ILGK).

This sequence belongs to the OspC family. As to quaternary structure, interacts with host calmodulin (CALM1, CALM2 and/or CALM3); specifically interacts with the apo form of calmodulin, preventing calcium-binding.

It is found in the secreted. The protein resides in the host cytoplasm. The enzyme catalyses L-arginyl-[protein] + NAD(+) = ADP-riboxanated L-argininyl-[protein] + nicotinamide + NH4(+) + H(+). With respect to regulation, interaction with host calmodulin (CALM1, CALM2 and/or CALM3) is required to mediate arginine ADP-riboxanation of host caspases. In terms of biological role, ADP-riboxanase effector that inhibits host cell pyroptosis. Acts by mediating arginine ADP-riboxanation of host CASP4/CASP11, blocking CASP4/CASP11 autoprocessing. This prevents CASP4 activation and ability to recognize and cleave GSDMD, thereby inhibiting LPS-induced pyroptosis. ADP-riboxanation takes place in two steps: OspC3 first catalyzes ADP-ribosylation of target Arg, and then initiates a deamination to remove one N-omega group. Independently of its ADP-riboxanase activity, acts as an inhibitor of calcium signaling by inhibiting host calmodulin, preventing activation of the JAK-STAT signaling pathway in response to interferon-beta. Mechanistically, acts by binding to the apo form of calmodulin, preventing calcium-binding and ability to activate host CaMK2 (CAMKII), which is required to stimulate the JAK-STAT signaling pathway in response to interferon-beta. This chain is Arginine ADP-riboxanase OspC3, found in Shigella flexneri.